The chain runs to 305 residues: tRNA uridine(34) hydroxylase (305 aa).

Residues 125-219 form the Rhodanese domain; the sequence is ADENTVVVDK…YLEEVPREQS (95 aa). The active-site Cysteine persulfide intermediate is Cys-179.

It belongs to the TrhO family.

It catalyses the reaction uridine(34) in tRNA + AH2 + O2 = 5-hydroxyuridine(34) in tRNA + A + H2O. Functionally, catalyzes oxygen-dependent 5-hydroxyuridine (ho5U) modification at position 34 in tRNAs. In Brucella abortus (strain S19), this protein is tRNA uridine(34) hydroxylase.